Consider the following 366-residue polypeptide: Pectinesterase A (366 aa).

An N-terminal signal peptide occupies residues 1 to 24; it reads MLKTISGTLALSLIIAASVHQAQA. Positions 109 and 153 each coordinate substrate. The active-site Proton donor is the Asp178. A disulfide bridge links Cys192 with Cys212. The active-site Nucleophile is the Asp199. Substrate contacts are provided by Arg219, Asn226, Tyr230, Arg267, Trp269, and Thr272.

Belongs to the pectinesterase family. In terms of assembly, monomer.

It localises to the secreted. It carries out the reaction [(1-&gt;4)-alpha-D-galacturonosyl methyl ester](n) + n H2O = [(1-&gt;4)-alpha-D-galacturonosyl](n) + n methanol + n H(+). It functions in the pathway glycan metabolism; pectin degradation; 2-dehydro-3-deoxy-D-gluconate from pectin: step 1/5. In terms of biological role, catalyzes the first step in maceration and soft-rotting of plant tissue. This chain is Pectinesterase A, found in Dickeya dadantii (strain 3937) (Erwinia chrysanthemi (strain 3937)).